Reading from the N-terminus, the 378-residue chain is Anhydro-N-acetylmuramic acid kinase (378 aa).

An ATP-binding site is contributed by 23–30; the sequence is GTSMDGAD.

This sequence belongs to the anhydro-N-acetylmuramic acid kinase family.

The catalysed reaction is 1,6-anhydro-N-acetyl-beta-muramate + ATP + H2O = N-acetyl-D-muramate 6-phosphate + ADP + H(+). The protein operates within amino-sugar metabolism; 1,6-anhydro-N-acetylmuramate degradation. It functions in the pathway cell wall biogenesis; peptidoglycan recycling. Functionally, catalyzes the specific phosphorylation of 1,6-anhydro-N-acetylmuramic acid (anhMurNAc) with the simultaneous cleavage of the 1,6-anhydro ring, generating MurNAc-6-P. Is required for the utilization of anhMurNAc either imported from the medium or derived from its own cell wall murein, and thus plays a role in cell wall recycling. This Bordetella bronchiseptica (strain ATCC BAA-588 / NCTC 13252 / RB50) (Alcaligenes bronchisepticus) protein is Anhydro-N-acetylmuramic acid kinase.